Consider the following 435-residue polypeptide: Proline--tRNA ligase (435 aa).

It belongs to the class-II aminoacyl-tRNA synthetase family. ProS type 2 subfamily. In terms of assembly, homodimer.

The protein resides in the cytoplasm. It carries out the reaction tRNA(Pro) + L-proline + ATP = L-prolyl-tRNA(Pro) + AMP + diphosphate. Its function is as follows. Catalyzes the attachment of proline to tRNA(Pro) in a two-step reaction: proline is first activated by ATP to form Pro-AMP and then transferred to the acceptor end of tRNA(Pro). This chain is Proline--tRNA ligase (proS), found in Sulfurimonas denitrificans (strain ATCC 33889 / DSM 1251) (Thiomicrospira denitrificans (strain ATCC 33889 / DSM 1251)).